The following is a 439-amino-acid chain: 5-methylthioadenosine/S-adenosylhomocysteine deaminase (439 aa).

Zn(2+) contacts are provided by histidine 70 and histidine 72. Residues glutamate 99 and histidine 192 each coordinate substrate. Histidine 219 contacts Zn(2+). The substrate site is built by glutamate 222 and aspartate 307. Position 307 (aspartate 307) interacts with Zn(2+).

Belongs to the metallo-dependent hydrolases superfamily. MTA/SAH deaminase family. Zn(2+) is required as a cofactor.

It catalyses the reaction S-adenosyl-L-homocysteine + H2O + H(+) = S-inosyl-L-homocysteine + NH4(+). The enzyme catalyses S-methyl-5'-thioadenosine + H2O + H(+) = S-methyl-5'-thioinosine + NH4(+). Its function is as follows. Catalyzes the deamination of 5-methylthioadenosine and S-adenosyl-L-homocysteine into 5-methylthioinosine and S-inosyl-L-homocysteine, respectively. Is also able to deaminate adenosine. The sequence is that of 5-methylthioadenosine/S-adenosylhomocysteine deaminase from Thermodesulfovibrio yellowstonii (strain ATCC 51303 / DSM 11347 / YP87).